A 118-amino-acid chain; its full sequence is MRANVLKRKLTLRIKRKKRIRAKISGCENFPRISVFKSNRTLYIQAIDDVKAVTLAAVDGRKLGVKANKEGAKKIAAEFAKTLKVKKIEQAVFDRNGYVYHGVIAALAESLRENGIRL.

Belongs to the universal ribosomal protein uL18 family. In terms of assembly, part of the 50S ribosomal subunit; part of the 5S rRNA/L5/L18/L25 subcomplex. Contacts the 5S and 23S rRNAs.

In terms of biological role, this is one of the proteins that bind and probably mediate the attachment of the 5S RNA into the large ribosomal subunit, where it forms part of the central protuberance. In Campylobacter jejuni subsp. jejuni serotype O:2 (strain ATCC 700819 / NCTC 11168), this protein is Large ribosomal subunit protein uL18.